Reading from the N-terminus, the 162-residue chain is Anaerobic nitrite reductase (162 aa).

Serine 2 carries the post-translational modification N-acetylserine. The 150-residue stretch at 9 to 158 (VFTEEQEALV…LVAAIKFEMK (150 aa)) folds into the Globin domain. The Homodimerization motif lies at 42–46 (EIAPS). Residues serine 52, lysine 66, histidine 70, arginine 100, and histidine 105 each coordinate heme b. The Homodimerization motif lies at 112–124 (NEHFEVTRFALLE).

Belongs to the plant globin family. As to quaternary structure, homodimer with distinct heme coordination in each subunits. Requires heme b as cofactor. In terms of tissue distribution, root nodules.

It is found in the cytoplasm. It localises to the nucleus. The enzyme catalyses Fe(III)-heme b-[protein] + nitric oxide + H2O = Fe(II)-heme b-[protein] + nitrite + 2 H(+). Its function is as follows. Phytoglobin that reduces nitrite to nitric oxide (NO) under anoxic conditions (e.g. during flooding or in waterlogged soil) and upon root nodulation. Required for general plant development and during nodulation, especially for the onset of symbiosis. Monitors nitric oxide (NO) levels during early phase of the nitrogen-fixing symbiosis and buffers oxygen in functioning nodules. May not function as an oxygen storage or transport protein. Has an unusually high affinity for O(2) through a hexacoordinate heme iron because of a very low dissociation constant. The sequence is that of Anaerobic nitrite reductase from Parasponia andersonii (Sponia andersonii).